An 86-amino-acid polypeptide reads, in one-letter code: Large ribosomal subunit protein uL24c (86 aa).

This sequence belongs to the universal ribosomal protein uL24 family. As to quaternary structure, part of the 50S ribosomal subunit.

It is found in the plastid. The protein localises to the chloroplast. Functionally, one of two assembly initiator proteins, it binds directly to the 5'-end of the 23S rRNA, where it nucleates assembly of the 50S subunit. This is Large ribosomal subunit protein uL24c (rpl24) from Heterosigma akashiwo (strain NIES-293 / 8280G21-1).